A 548-amino-acid polypeptide reads, in one-letter code: Chaperonin GroEL 1 (548 aa).

ATP is bound by residues 30-33 (TLGP), Lys-51, 87-91 (DGTTT), Gly-415, 479-481 (NAA), and Asp-495.

The protein belongs to the chaperonin (HSP60) family. In terms of assembly, forms a cylinder of 14 subunits composed of two heptameric rings stacked back-to-back. Interacts with the co-chaperonin GroES.

Its subcellular location is the cytoplasm. It catalyses the reaction ATP + H2O + a folded polypeptide = ADP + phosphate + an unfolded polypeptide.. Together with its co-chaperonin GroES, plays an essential role in assisting protein folding. The GroEL-GroES system forms a nano-cage that allows encapsulation of the non-native substrate proteins and provides a physical environment optimized to promote and accelerate protein folding. The polypeptide is Chaperonin GroEL 1 (Anaeromyxobacter dehalogenans (strain 2CP-C)).